The primary structure comprises 29 residues: Brevinin-2Ed (29 aa).

Cysteines 23 and 29 form a disulfide.

Belongs to the frog skin active peptide (FSAP) family. Brevinin subfamily. In terms of tissue distribution, expressed by the skin glands.

Its subcellular location is the secreted. In terms of biological role, shows antibacterial activity against representative Gram-negative and Gram-positive bacterial species, and hemolytic activity. This Pelophylax lessonae (Pool frog) protein is Brevinin-2Ed.